We begin with the raw amino-acid sequence, 91 residues long: UPF0147 protein DKAM_0139 (91 aa).

Belongs to the UPF0147 family.

This is UPF0147 protein DKAM_0139 from Desulfurococcus amylolyticus (strain DSM 18924 / JCM 16383 / VKM B-2413 / 1221n) (Desulfurococcus kamchatkensis).